Here is a 424-residue protein sequence, read N- to C-terminus: UDP-N-acetylglucosamine 1-carboxyvinyltransferase (424 aa).

Residue 22–23 participates in phosphoenolpyruvate binding; the sequence is KN. Arg-95 is a UDP-N-acetyl-alpha-D-glucosamine binding site. The active-site Proton donor is Cys-119. Cys-119 bears the 2-(S-cysteinyl)pyruvic acid O-phosphothioketal mark. UDP-N-acetyl-alpha-D-glucosamine-binding positions include 124-128, Asp-311, and Ile-333; that span reads RPVDQ.

This sequence belongs to the EPSP synthase family. MurA subfamily.

Its subcellular location is the cytoplasm. The enzyme catalyses phosphoenolpyruvate + UDP-N-acetyl-alpha-D-glucosamine = UDP-N-acetyl-3-O-(1-carboxyvinyl)-alpha-D-glucosamine + phosphate. The protein operates within cell wall biogenesis; peptidoglycan biosynthesis. Cell wall formation. Adds enolpyruvyl to UDP-N-acetylglucosamine. In Polaromonas sp. (strain JS666 / ATCC BAA-500), this protein is UDP-N-acetylglucosamine 1-carboxyvinyltransferase.